Consider the following 302-residue polypeptide: MATLCTSAINMNPNLTNSLSNSINLSSTPTNLSSLRSTFTNSCSLGLNVAVKSVQISRNKPNVVCMSWDGPLSSVKLILQGRNLEVSDNVRSHVEDKVGKSVAKHSHLVREVDVRLSARGGDLSKGPKLRRCEVTLFTKRHGVIRAEEDAESLYSSIDLVSSIIQRKLRKIKDKVSDHGRHMKGFNRSKVRDPEPVRITREEVLEEVESAPAPVSVEDDDFIEEVVRTKYFDMPPLTITEAVEQLENVDHDFYAFRNEETGDINILYKRKEGGYGLIIPKDGKTEKLESLPVQTDKQPSFAE.

The transit peptide at 1–66 (MATLCTSAIN…SRNKPNVVCM (66 aa)) directs the protein to the chloroplast.

In terms of assembly, binds to the mRNA channel of the chloroplast small ribosomal subunit and interacts with 16S sRNA nucleotides at the A-site and P-site.

The protein localises to the plastid. It is found in the chloroplast stroma. Ribosome-binding factor involved in light- and temperature-dependent control of protein synthesis. Interacts with 16S sRNA nucleotides at the A-site and P-site, where it protects the decoding center and inhibits translation by preventing tRNA binding. Stabilizes 70S ribosomes against dissociation. May be recycled by the combined action of ribosome-recycling factor (RRF) and EF-G. In Spinacia oleracea (Spinach), this protein is Ribosome-binding factor PSRP1, chloroplastic (PSRP1).